Consider the following 104-residue polypeptide: U20-lycotoxin-Ls1c (104 aa).

An N-terminal signal peptide occupies residues 1–30 (MFSTSDQVSKMNSRILSALLILGIATCVIA). Residues 31–76 (GGFCPKSRHPQCDLSYKINDCCAQSDCRVGSVCCVEGCGNVCRAES) form the WAP domain. 5 disulfides stabilise this stretch: Cys-34–Cys-64, Cys-42–Cys-68, Cys-51–Cys-63, Cys-52–Cys-90, and Cys-57–Cys-72.

It belongs to the venom protein 11 family. 02 (wap-2) subfamily. In terms of processing, contains 5 disulfide bonds. In terms of tissue distribution, expressed by the venom gland.

The protein localises to the secreted. Functionally, has antibacterial activity. The chain is U20-lycotoxin-Ls1c from Lycosa singoriensis (Wolf spider).